A 353-amino-acid polypeptide reads, in one-letter code: 4-hydroxy-2-oxovalerate aldolase 1 (353 aa).

Positions 14–266 (VRMTDTSLRD…KTGIDFFDIA (253 aa)) constitute a Pyruvate carboxyltransferase domain. 22–23 (RD) is a binding site for substrate. Aspartate 23 is a Mn(2+) binding site. Histidine 26 (proton acceptor) is an active-site residue. Substrate is bound by residues serine 176 and histidine 205. Residues histidine 205 and histidine 207 each coordinate Mn(2+). Residue tyrosine 296 participates in substrate binding.

Belongs to the 4-hydroxy-2-oxovalerate aldolase family.

It carries out the reaction (S)-4-hydroxy-2-oxopentanoate = acetaldehyde + pyruvate. This is 4-hydroxy-2-oxovalerate aldolase 1 from Mycobacterium sp. (strain KMS).